The primary structure comprises 230 residues: MDNKIIVALDYETENEALNFIDQVDPSLCRLKVGKEMFTTLGAHFVKQLHDRKFDVFLDLKYHDIPNTVARAVRSAADLGVWMVDLHASGGLTMMEEAKKILEPYGKDAPLLIAVTVLTSMEDLDLLQIGINASPMEQVIRLSHLAKRAGLDGVVCSPQEVEVLRTHCGDDFKLVTPGIRPAGSDFGDQRRVMTPKQAIQTGADFLVIGRPITQAQEPLSILKAINASIA.

Residues Asp10, Lys32, 59-68 (DLKYHDIPNT), Thr119, Arg180, Gln189, Gly209, and Arg210 contribute to the substrate site. Catalysis depends on Lys61, which acts as the Proton donor.

This sequence belongs to the OMP decarboxylase family. Type 1 subfamily. As to quaternary structure, homodimer.

The catalysed reaction is orotidine 5'-phosphate + H(+) = UMP + CO2. Its pathway is pyrimidine metabolism; UMP biosynthesis via de novo pathway; UMP from orotate: step 2/2. Catalyzes the decarboxylation of orotidine 5'-monophosphate (OMP) to uridine 5'-monophosphate (UMP). The polypeptide is Orotidine 5'-phosphate decarboxylase (Haemophilus ducreyi (strain 35000HP / ATCC 700724)).